Reading from the N-terminus, the 205-residue chain is GTP cyclohydrolase-2 (205 aa).

49 to 53 (RLHSE) provides a ligand contact to GTP. The Zn(2+) site is built by Cys54, Cys65, and Cys67. GTP is bound by residues Gln70, 92–94 (EGR), and Thr114. The active-site Proton acceptor is Asp126. The active-site Nucleophile is the Arg128. Residues Thr149 and Lys154 each contribute to the GTP site.

The protein belongs to the GTP cyclohydrolase II family. It depends on Zn(2+) as a cofactor.

It catalyses the reaction GTP + 4 H2O = 2,5-diamino-6-hydroxy-4-(5-phosphoribosylamino)-pyrimidine + formate + 2 phosphate + 3 H(+). The protein operates within cofactor biosynthesis; riboflavin biosynthesis; 5-amino-6-(D-ribitylamino)uracil from GTP: step 1/4. Functionally, catalyzes the conversion of GTP to 2,5-diamino-6-ribosylamino-4(3H)-pyrimidinone 5'-phosphate (DARP), formate and pyrophosphate. The polypeptide is GTP cyclohydrolase-2 (Pseudomonas entomophila (strain L48)).